Reading from the N-terminus, the 152-residue chain is Proline-rich acidic protein 1 (152 aa).

Residues 1–20 form the signal peptide; that stretch reads MKRFLLATCLVAVLLWEAGA.

In terms of assembly, interacts with MTTP. Interacts with MAD1L1. Highly expressed in the small intestine where it shows a proximal-distal graded expression.

The protein localises to the secreted. The protein resides in the endoplasmic reticulum. In terms of biological role, lipid-binding protein which promotes lipid absorption by facilitating MTTP-mediated lipid transfer (mainly triglycerides and phospholipids) and MTTP-mediated apoB lipoprotein assembly and secretion. Protects the gastrointestinal epithelium from irradiation-induced apoptosis. May play an important role in maintaining normal growth homeostasis in epithelial cells. Involved in p53/TP53-dependent cell survival after DNA damage. This Rattus norvegicus (Rat) protein is Proline-rich acidic protein 1 (Prap1).